Here is a 670-residue protein sequence, read N- to C-terminus: Putative segment polarity protein dishevelled homolog DVL1P1 (670 aa).

Positions 1-85 (MAETKIIYHM…RVVSWLVLVE (85 aa)) constitute a DIX domain. A disordered region spans residues 89 to 240 (SDAGSQGTDS…ADRASSFSSM (152 aa)). The span at 142 to 151 (SHRRDRARRR) shows a compositional bias: basic residues. The segment covering 152-171 (NREEAARTNGHPRGDRRRDV) has biased composition (basic and acidic residues). Low complexity-rich tracts occupy residues 176–192 (DSAS…SSFV) and 201–214 (SRLS…TSSR). A compositionally biased stretch (basic residues) spans 215 to 228 (LIRKHKRRRRKQRL). The PDZ domain maps to 251-323 (TVTLNMERHH…NDDAVRVLRE (73 aa)). A DEP domain is found at 400 to 474 (PDSGLEIRDR…SEQCYYVFGD (75 aa)). The tract at residues 518–642 (PGPPPCFPPA…PGGPPVRELA (125 aa)) is disordered. Low complexity-rich tracts occupy residues 526–553 (PAYQ…SSGS) and 600–614 (SRGS…SYAP).

The protein belongs to the DSH family. In terms of tissue distribution, expressed in thymus, heart, liver, kidney, brain, skeletal muscle, and pancreas.

It localises to the cytoplasm. May play a role in the signal transduction pathway mediated by multiple Wnt genes. The chain is Putative segment polarity protein dishevelled homolog DVL1P1 (DVL1P1) from Homo sapiens (Human).